The chain runs to 614 residues: Bifunctional enzyme CysN/CysC (614 aa).

The interval 1-441 is sulfate adenylyltransferase; the sequence is MTTLLRLATA…SLVTAQDRPP (441 aa). The 216-residue stretch at 2 to 217 folds into the tr-type G domain; sequence TTLLRLATAG…DVYIAGDRNM (216 aa). The G1 stretch occupies residues 11–18; it reads GSVDDGKS. 11 to 18 lines the GTP pocket; sequence GSVDDGKS. The interval 67 to 71 is G2; sequence GITID. Positions 88 to 91 are G3; it reads DTPG. Residues 88 to 92 and 143 to 146 each bind GTP; these read DTPGH and NKMD. The G4 stretch occupies residues 143 to 146; the sequence is NKMD. The interval 180-182 is G5; that stretch reads SAL. The segment at 442-614 is adenylyl-sulfate kinase; the sequence is RGKTVWFTGL…EVIDLLESSS (173 aa). Residue 450 to 457 participates in ATP binding; sequence GLSGSGKS. Ser-524 acts as the Phosphoserine intermediate in catalysis. The tract at residues 578 to 597 is disordered; it reads GIDSPYQRPKNPDLRLTPDR. Basic and acidic residues predominate over residues 587–597; sequence KNPDLRLTPDR.

The protein in the C-terminal section; belongs to the APS kinase family. In the N-terminal section; belongs to the TRAFAC class translation factor GTPase superfamily. Classic translation factor GTPase family. CysN/NodQ subfamily. In terms of assembly, heterodimer composed of CysD, the smaller subunit, and CysNC.

The catalysed reaction is sulfate + ATP + H(+) = adenosine 5'-phosphosulfate + diphosphate. The enzyme catalyses adenosine 5'-phosphosulfate + ATP = 3'-phosphoadenylyl sulfate + ADP + H(+). It participates in sulfur metabolism; hydrogen sulfide biosynthesis; sulfite from sulfate: step 1/3. Its pathway is sulfur metabolism; hydrogen sulfide biosynthesis; sulfite from sulfate: step 2/3. In terms of biological role, with CysD forms the ATP sulfurylase (ATPS) that catalyzes the adenylation of sulfate producing adenosine 5'-phosphosulfate (APS) and diphosphate, the first enzymatic step in sulfur assimilation pathway. APS synthesis involves the formation of a high-energy phosphoric-sulfuric acid anhydride bond driven by GTP hydrolysis by CysN coupled to ATP hydrolysis by CysD. Its function is as follows. APS kinase catalyzes the synthesis of activated sulfate. The polypeptide is Bifunctional enzyme CysN/CysC (cysNC) (Mycobacterium tuberculosis (strain CDC 1551 / Oshkosh)).